The sequence spans 433 residues: Putative ankyrin repeat protein R578 (433 aa).

4 ANK repeats span residues Asn-166–Glu-195, Asp-197–Leu-224, Val-356–Ser-386, and Pro-388–Glu-415.

The sequence is that of Putative ankyrin repeat protein R578 from Acanthamoeba polyphaga mimivirus (APMV).